Reading from the N-terminus, the 743-residue chain is Phosphoribosylformylglycinamidine synthase subunit PurL (743 aa).

Residue histidine 50 is part of the active site. Positions 53 and 92 each coordinate ATP. Residue glutamate 94 participates in Mg(2+) binding. Substrate contacts are provided by residues 95 to 98 and arginine 117; that span reads SHNH. Residue histidine 96 is the Proton acceptor of the active site. Aspartate 118 provides a ligand contact to Mg(2+). Glutamine 241 is a binding site for substrate. Aspartate 269 is a binding site for Mg(2+). A substrate-binding site is contributed by 313–315; the sequence is ESQ. ATP contacts are provided by aspartate 495 and glycine 532. Residue asparagine 533 participates in Mg(2+) binding. Serine 535 contributes to the substrate binding site.

Belongs to the FGAMS family. Monomer. Part of the FGAM synthase complex composed of 1 PurL, 1 PurQ and 2 PurS subunits.

The protein localises to the cytoplasm. The enzyme catalyses N(2)-formyl-N(1)-(5-phospho-beta-D-ribosyl)glycinamide + L-glutamine + ATP + H2O = 2-formamido-N(1)-(5-O-phospho-beta-D-ribosyl)acetamidine + L-glutamate + ADP + phosphate + H(+). The protein operates within purine metabolism; IMP biosynthesis via de novo pathway; 5-amino-1-(5-phospho-D-ribosyl)imidazole from N(2)-formyl-N(1)-(5-phospho-D-ribosyl)glycinamide: step 1/2. Its function is as follows. Part of the phosphoribosylformylglycinamidine synthase complex involved in the purines biosynthetic pathway. Catalyzes the ATP-dependent conversion of formylglycinamide ribonucleotide (FGAR) and glutamine to yield formylglycinamidine ribonucleotide (FGAM) and glutamate. The FGAM synthase complex is composed of three subunits. PurQ produces an ammonia molecule by converting glutamine to glutamate. PurL transfers the ammonia molecule to FGAR to form FGAM in an ATP-dependent manner. PurS interacts with PurQ and PurL and is thought to assist in the transfer of the ammonia molecule from PurQ to PurL. In Rhizobium etli (strain CIAT 652), this protein is Phosphoribosylformylglycinamidine synthase subunit PurL.